The sequence spans 94 residues: Small ribosomal subunit protein bS18 (94 aa).

Low complexity predominate over residues 1-12 (MSEQNSRPQNSE). Residues 1 to 29 (MSEQNSRPQNSERPQRSRRPQGGPRRRRK) are disordered. Residues 16-29 (RSRRPQGGPRRRRK) show a composition bias toward basic residues.

Belongs to the bacterial ribosomal protein bS18 family. As to quaternary structure, part of the 30S ribosomal subunit. Forms a tight heterodimer with protein bS6.

Its function is as follows. Binds as a heterodimer with protein bS6 to the central domain of the 16S rRNA, where it helps stabilize the platform of the 30S subunit. The protein is Small ribosomal subunit protein bS18 of Leuconostoc citreum (strain KM20).